We begin with the raw amino-acid sequence, 705 residues long: Elongation factor G (705 aa).

The 281-residue stretch at 7-287 folds into the tr-type G domain; sequence HLTRNIGIMA…YVCAFLPSPL (281 aa). GTP is bound by residues 16 to 23, 84 to 88, and 138 to 141; these read AHIDAGKT, DTPGH, and NKMD. The segment at 291 to 312 is disordered; that stretch reads NVVGTNPDTGAEEDRKPSEDDK. Positions 302–312 are enriched in basic and acidic residues; sequence EEDRKPSEDDK.

The protein belongs to the TRAFAC class translation factor GTPase superfamily. Classic translation factor GTPase family. EF-G/EF-2 subfamily.

It localises to the cytoplasm. Functionally, catalyzes the GTP-dependent ribosomal translocation step during translation elongation. During this step, the ribosome changes from the pre-translocational (PRE) to the post-translocational (POST) state as the newly formed A-site-bound peptidyl-tRNA and P-site-bound deacylated tRNA move to the P and E sites, respectively. Catalyzes the coordinated movement of the two tRNA molecules, the mRNA and conformational changes in the ribosome. The polypeptide is Elongation factor G (Bacteroides fragilis (strain ATCC 25285 / DSM 2151 / CCUG 4856 / JCM 11019 / LMG 10263 / NCTC 9343 / Onslow / VPI 2553 / EN-2)).